Consider the following 261-residue polypeptide: Putative quercetin 2,3-dioxygenase Ta0133 (261 aa).

A divalent metal cation contacts are provided by His-17, His-19, His-61, and Glu-63.

This sequence belongs to the pirin family. Requires a divalent metal cation as cofactor.

The catalysed reaction is quercetin + O2 = 2-(3,4-dihydroxybenzoyloxy)-4,6-dihydroxybenzoate + CO. It participates in flavonoid metabolism; quercetin degradation. Putative quercetin 2,3-dioxygenase. The polypeptide is Putative quercetin 2,3-dioxygenase Ta0133 (Thermoplasma acidophilum (strain ATCC 25905 / DSM 1728 / JCM 9062 / NBRC 15155 / AMRC-C165)).